Consider the following 445-residue polypeptide: Probable fructoselysine/psicoselysine transporter FrlA (445 aa).

The next 12 helical transmembrane spans lie at 10–30, 38–58, 93–113, 121–141, 155–175, 181–201, 236–256, 273–293, 334–354, 355–375, 389–410, and 417–435; these read LGFW…GIFV, AAGT…IVIP, GWAS…LAIV, PIDP…FMLL, LITI…IFWF, AAPT…LAGI, CLLV…LMPF, IPAL…IVIL, IILQ…TSLL, GYFT…IIWC, AFGL…STFV, and LICA…AFWA.

This sequence belongs to the amino acid-polyamine-organocation (APC) superfamily.

The protein resides in the cell inner membrane. It catalyses the reaction N(6)-(D-fructosyl)-L-lysine(in) = N(6)-(D-fructosyl)-L-lysine(out). The catalysed reaction is N(6)-(D-psicosyl)-L-lysine(in) = N(6)-(D-psicosyl)-L-lysine(out). The protein operates within carbohydrate metabolism; fructoselysine degradation. Functionally, is likely involved in the transport of fructoselysine and psicoselysine to the cytoplasm, where they are degraded. In Escherichia coli (strain K12), this protein is Probable fructoselysine/psicoselysine transporter FrlA.